The sequence spans 235 residues: Glucosamine-6-phosphate deaminase (235 aa).

The Proton acceptor; for enolization step role is filled by Asp62. Asn128 functions as the For ring-opening step in the catalytic mechanism. Residue His130 is the Proton acceptor; for ring-opening step of the active site. Glu135 serves as the catalytic For ring-opening step.

The protein belongs to the glucosamine/galactosamine-6-phosphate isomerase family. NagB subfamily.

The catalysed reaction is alpha-D-glucosamine 6-phosphate + H2O = beta-D-fructose 6-phosphate + NH4(+). The protein operates within amino-sugar metabolism; N-acetylneuraminate degradation; D-fructose 6-phosphate from N-acetylneuraminate: step 5/5. Functionally, catalyzes the reversible isomerization-deamination of glucosamine 6-phosphate (GlcN6P) to form fructose 6-phosphate (Fru6P) and ammonium ion. The polypeptide is Glucosamine-6-phosphate deaminase (Streptococcus pneumoniae serotype 2 (strain D39 / NCTC 7466)).